The following is a 74-amino-acid chain: Large ribosomal subunit protein uL29 (74 aa).

Belongs to the universal ribosomal protein uL29 family.

In Streptomyces avermitilis (strain ATCC 31267 / DSM 46492 / JCM 5070 / NBRC 14893 / NCIMB 12804 / NRRL 8165 / MA-4680), this protein is Large ribosomal subunit protein uL29.